Here is a 186-residue protein sequence, read N- to C-terminus: Dual-action ribosomal maturation protein DarP (186 aa).

This sequence belongs to the DarP family.

The protein localises to the cytoplasm. Its function is as follows. Member of a network of 50S ribosomal subunit biogenesis factors which assembles along the 30S-50S interface, preventing incorrect 23S rRNA structures from forming. Promotes peptidyl transferase center (PTC) maturation. The chain is Dual-action ribosomal maturation protein DarP from Proteus mirabilis (strain HI4320).